A 245-amino-acid chain; its full sequence is Ribosomal RNA small subunit methyltransferase G (245 aa).

Residues glycine 80, phenylalanine 85, 103–105, 131–132, and arginine 150 contribute to the S-adenosyl-L-methionine site; these read DAT and AE.

This sequence belongs to the methyltransferase superfamily. RNA methyltransferase RsmG family.

The protein resides in the cytoplasm. Functionally, specifically methylates the N7 position of a guanine in 16S rRNA. In Deinococcus geothermalis (strain DSM 11300 / CIP 105573 / AG-3a), this protein is Ribosomal RNA small subunit methyltransferase G.